Here is a 432-residue protein sequence, read N- to C-terminus: UDP-N-acetylmuramoylalanine--D-glutamate ligase (432 aa).

98-104 (GTNGKST) lines the ATP pocket.

This sequence belongs to the MurCDEF family.

It localises to the cytoplasm. It catalyses the reaction UDP-N-acetyl-alpha-D-muramoyl-L-alanine + D-glutamate + ATP = UDP-N-acetyl-alpha-D-muramoyl-L-alanyl-D-glutamate + ADP + phosphate + H(+). The protein operates within cell wall biogenesis; peptidoglycan biosynthesis. Cell wall formation. Catalyzes the addition of glutamate to the nucleotide precursor UDP-N-acetylmuramoyl-L-alanine (UMA). This chain is UDP-N-acetylmuramoylalanine--D-glutamate ligase, found in Fusobacterium nucleatum subsp. nucleatum (strain ATCC 25586 / DSM 15643 / BCRC 10681 / CIP 101130 / JCM 8532 / KCTC 2640 / LMG 13131 / VPI 4355).